A 91-amino-acid polypeptide reads, in one-letter code: Probable Fe(2+)-trafficking protein (91 aa).

This sequence belongs to the Fe(2+)-trafficking protein family. In terms of assembly, monomer.

Could be a mediator in iron transactions between iron acquisition and iron-requiring processes, such as synthesis and/or repair of Fe-S clusters in biosynthetic enzymes. In Klebsiella pneumoniae subsp. pneumoniae (strain ATCC 700721 / MGH 78578), this protein is Probable Fe(2+)-trafficking protein.